The following is a 228-amino-acid chain: DNA-binding response regulator MtrA (228 aa).

One can recognise a Response regulatory domain in the interval 7–120 (RILVVDDDPS…ELVARVRARL (114 aa)). Position 56 is a 4-aspartylphosphate (Asp56). The ompR/PhoB-type DNA-binding region spans 128–227 (AEMLSIGDVE…VRGVGYKAGP (100 aa)).

In terms of assembly, probably a monomer when inactive, phosphorylation may permit it to oligomerize. The monomeric form does not seem to be phosphorylated. Post-translationally, phosphorylated by MtrB.

Its subcellular location is the cytoplasm. In terms of biological role, member of the two-component regulatory system MtrA/MtrB, responding to environmental signals. Controls expression of a number of genes including dnaA, ripA, fbpB and probably itself. Probably plays a role in cell division. The polypeptide is DNA-binding response regulator MtrA (mtrA) (Mycolicibacterium smegmatis (strain ATCC 700084 / mc(2)155) (Mycobacterium smegmatis)).